The chain runs to 232 residues: DOA4-independent degradation protein 4 (232 aa).

Residues 14 to 97 are a coiled coil; sequence PQERLKKNQR…AISLRIQAVR (84 aa). An interaction with VPS4 region spans residues 183-232; that stretch reads LQSTPQNLVSNAPIAETAMGIPEPIGAGSEFHGNPDDDLQARLNTLKKQT. The tract at residues 203–232 is disordered; that stretch reads IPEPIGAGSEFHGNPDDDLQARLNTLKKQT. The short motif at 219–229 is the MIT-interacting motif element; that stretch reads DDLQARLNTLK.

It belongs to the SNF7 family. In terms of assembly, core component of the ESCRT-III complex (endosomal sorting required for transport complex III). ESCRT-III appears to be sequentially assembled as a flat lattice on the endosome membrane and forms a transient 450 kDa complex that contains DID4, oligomerized SNF7, VPS20 and VPS24. SNF7 oligomerization into a membrane-associated filament is nucleated by association of SNF7 with VPS20; the process is terminated through association of VPS24, possibly by capping the SNF7 filament. VPS24 subsequently associates with DID4/VPS2.

It localises to the cytoplasm. Its subcellular location is the endosome membrane. Functionally, required for the sorting and concentration of proteins resulting in the entry of these proteins into the invaginating vesicles of the multivesicular body (MVB). Acts a component of the ESCRT-III complex, which appears to be critical for late steps in MVB sorting, such as membrane invagination and final cargo sorting and recruitment of late-acting components of the sorting machinery. The MVB pathway requires the sequential function of ESCRT-O, -I,-II and -III complex assemblies. Can directly stimulate VPS4 ATPase activity. The DID4/VPS2-VPS24 subcomplex is required for the VPS4-dependent dissociation of ESCRT-III. This is DOA4-independent degradation protein 4 (DID4) from Saccharomyces cerevisiae (strain ATCC 204508 / S288c) (Baker's yeast).